The chain runs to 254 residues: Imidazole glycerol phosphate synthase subunit HisF (254 aa).

Residues Asp12 and Asp131 contribute to the active site.

It belongs to the HisA/HisF family. Heterodimer of HisH and HisF.

Its subcellular location is the cytoplasm. It catalyses the reaction 5-[(5-phospho-1-deoxy-D-ribulos-1-ylimino)methylamino]-1-(5-phospho-beta-D-ribosyl)imidazole-4-carboxamide + L-glutamine = D-erythro-1-(imidazol-4-yl)glycerol 3-phosphate + 5-amino-1-(5-phospho-beta-D-ribosyl)imidazole-4-carboxamide + L-glutamate + H(+). It participates in amino-acid biosynthesis; L-histidine biosynthesis; L-histidine from 5-phospho-alpha-D-ribose 1-diphosphate: step 5/9. Functionally, IGPS catalyzes the conversion of PRFAR and glutamine to IGP, AICAR and glutamate. The HisF subunit catalyzes the cyclization activity that produces IGP and AICAR from PRFAR using the ammonia provided by the HisH subunit. The chain is Imidazole glycerol phosphate synthase subunit HisF from Frankia casuarinae (strain DSM 45818 / CECT 9043 / HFP020203 / CcI3).